The sequence spans 1116 residues: MAP kinase kinase kinase mkh1 (1116 aa).

Disordered stretches follow at residues 510–601 and 618–647; these read LKMP…SNSL and ALDESDLSGDPFWAIQPKQSSSQVPKENHH. Residues 515 to 531 show a composition bias toward low complexity; the sequence is NSGSSAPQSPSSNTSAS. Residues 553–569 show a composition bias toward basic residues; that stretch reads LRRKNTLTRRPSIRHAR. Low complexity predominate over residues 588–601; sequence SFDPKASSKSSNSL. Over residues 634–647 the composition is skewed to polar residues; that stretch reads PKQSSSQVPKENHH. The region spanning 825-1094 is the Protein kinase domain; sequence WMKGELIGNG…AEELLNHPFM (270 aa). Residues 831–839 and lysine 854 each bind ATP; that span reads IGNGTYGKV. Aspartate 955 serves as the catalytic Proton acceptor.

This sequence belongs to the protein kinase superfamily. STE Ser/Thr protein kinase family. MAP kinase kinase kinase subfamily.

It catalyses the reaction L-seryl-[protein] + ATP = O-phospho-L-seryl-[protein] + ADP + H(+). The enzyme catalyses L-threonyl-[protein] + ATP = O-phospho-L-threonyl-[protein] + ADP + H(+). Functionally, may regulate cell morphology, cell wall integrity, salt resistance, cell cycle reentry from stationary-phase arrest, and filamentous growth in response to stress. Activates the MAP kinase kinase skh1/pek1 by phosphorylation. This is MAP kinase kinase kinase mkh1 (mkh1) from Schizosaccharomyces pombe (strain 972 / ATCC 24843) (Fission yeast).